The sequence spans 142 residues: Putative pre-16S rRNA nuclease (142 aa).

It belongs to the YqgF nuclease family.

It localises to the cytoplasm. Its function is as follows. Could be a nuclease involved in processing of the 5'-end of pre-16S rRNA. The chain is Putative pre-16S rRNA nuclease from Mycoplasmoides gallisepticum (strain R(low / passage 15 / clone 2)) (Mycoplasma gallisepticum).